The following is a 145-amino-acid chain: Large ribosomal subunit protein uL13 (145 aa).

This sequence belongs to the universal ribosomal protein uL13 family. Part of the 50S ribosomal subunit.

This protein is one of the early assembly proteins of the 50S ribosomal subunit, although it is not seen to bind rRNA by itself. It is important during the early stages of 50S assembly. The polypeptide is Large ribosomal subunit protein uL13 (Exiguobacterium sibiricum (strain DSM 17290 / CCUG 55495 / CIP 109462 / JCM 13490 / 255-15)).